Here is a 468-residue protein sequence, read N- to C-terminus: Trigger factor (468 aa).

Residues 162-243 enclose the PPIase FKBP-type domain; sequence GDVLTLDLQA…VSQVAARELP (82 aa). A disordered region spans residues 428–468; the sequence is NGEIVDLDDEEDEETEAAEADATEAADAEKADDKAEEKTEG. The span at 432-453 shows a compositional bias: acidic residues; sequence VDLDDEEDEETEAAEADATEAA. Residues 454–468 are compositionally biased toward basic and acidic residues; that stretch reads DAEKADDKAEEKTEG.

The protein belongs to the FKBP-type PPIase family. Tig subfamily.

It localises to the cytoplasm. It carries out the reaction [protein]-peptidylproline (omega=180) = [protein]-peptidylproline (omega=0). In terms of biological role, involved in protein export. Acts as a chaperone by maintaining the newly synthesized protein in an open conformation. Functions as a peptidyl-prolyl cis-trans isomerase. The sequence is that of Trigger factor from Streptomyces coelicolor (strain ATCC BAA-471 / A3(2) / M145).